Here is a 1434-residue protein sequence, read N- to C-terminus: Inositol hexakisphosphate and diphosphoinositol-pentakisphosphate kinase 1 (1434 aa).

Residue K66–K67 participates in substrate binding. ATP-binding positions include R147, K200, H207, R226, E250–M253, and D259–K261. R226 to K227 lines the substrate pocket. Substrate contacts are provided by K261 and R275. Residues S277, D322, and D334 to N336 each bind ATP. Position 339–342 (S339–K342) interacts with substrate. Positions P384–A455 are polyphosphoinositide-binding domain. The interval E916–G1017 is disordered. 2 positions are modified to phosphoserine: S941 and S984. Over residues F1002–G1017 the composition is skewed to polar residues. 4 positions are modified to phosphoserine: S1034, S1070, S1142, and S1149. 3 disordered regions span residues N1133–D1193, E1228–V1251, and T1396–S1434. Low complexity predominate over residues S1165 to V1183. A compositionally biased stretch (acidic residues) spans L1403–S1434.

This sequence belongs to the histidine acid phosphatase family. VIP1 subfamily.

The protein localises to the cytoplasm. The protein resides in the cytosol. It is found in the cell membrane. It carries out the reaction 1D-myo-inositol hexakisphosphate + ATP = 1-diphospho-1D-myo-inositol 2,3,4,5,6-pentakisphosphate + ADP. It catalyses the reaction 5-diphospho-1D-myo-inositol 1,2,3,4,6-pentakisphosphate + ATP + H(+) = 1,5-bis(diphospho)-1D-myo-inositol 2,3,4,6-tetrakisphosphate + ADP. In terms of biological role, bifunctional inositol kinase that acts in concert with the IP6K kinases IP6K1, IP6K2 and IP6K3 to synthesize the diphosphate group-containing inositol pyrophosphates diphosphoinositol pentakisphosphate, PP-InsP5, and bis-diphosphoinositol tetrakisphosphate, (PP)2-InsP4. PP-InsP5 and (PP)2-InsP4, also respectively called InsP7 and InsP8, regulate a variety of cellular processes, including apoptosis, vesicle trafficking, cytoskeletal dynamics, exocytosis, insulin signaling and neutrophil activation. Phosphorylates inositol hexakisphosphate (InsP6) at position 1 to produce PP-InsP5 which is in turn phosphorylated by IP6Ks to produce (PP)2-InsP4. Alternatively, phosphorylates PP-InsP5 at position 1, produced by IP6Ks from InsP6, to produce (PP)2-InsP4. Activated when cells are exposed to hyperosmotic stress. In Rattus norvegicus (Rat), this protein is Inositol hexakisphosphate and diphosphoinositol-pentakisphosphate kinase 1.